The following is an 86-amino-acid chain: Large ribosomal subunit protein bL27c (86 aa).

Residues 1 to 27 (MAHKKGSGSTRNGRDSNSKRLGVKKYG) are disordered.

The protein belongs to the bacterial ribosomal protein bL27 family.

The protein localises to the plastid. Its subcellular location is the chloroplast. The chain is Large ribosomal subunit protein bL27c from Pyropia yezoensis (Susabi-nori).